We begin with the raw amino-acid sequence, 199 residues long: Octanoyltransferase (199 aa).

Residues S27–K199 form the BPL/LPL catalytic domain. Residues R66–H73, S133–G135, and G146–A148 contribute to the substrate site. C164 functions as the Acyl-thioester intermediate in the catalytic mechanism.

This sequence belongs to the LipB family.

The protein localises to the cytoplasm. The enzyme catalyses octanoyl-[ACP] + L-lysyl-[protein] = N(6)-octanoyl-L-lysyl-[protein] + holo-[ACP] + H(+). The protein operates within protein modification; protein lipoylation via endogenous pathway; protein N(6)-(lipoyl)lysine from octanoyl-[acyl-carrier-protein]: step 1/2. Catalyzes the transfer of endogenously produced octanoic acid from octanoyl-acyl-carrier-protein onto the lipoyl domains of lipoate-dependent enzymes. Lipoyl-ACP can also act as a substrate although octanoyl-ACP is likely to be the physiological substrate. The chain is Octanoyltransferase from Legionella pneumophila (strain Paris).